We begin with the raw amino-acid sequence, 210 residues long: Phosphoenolpyruvate guanylyltransferase (210 aa).

Phosphoenolpyruvate is bound by residues T130, G146, and S149.

It belongs to the CofC family.

It catalyses the reaction phosphoenolpyruvate + GTP + H(+) = enolpyruvoyl-2-diphospho-5'-guanosine + diphosphate. It participates in cofactor biosynthesis; coenzyme F420 biosynthesis. Its function is as follows. Guanylyltransferase that catalyzes the activation of phosphoenolpyruvate (PEP) as enolpyruvoyl-2-diphospho-5'-guanosine, via the condensation of PEP with GTP. It is involved in the biosynthesis of coenzyme F420, a hydride carrier cofactor. This chain is Phosphoenolpyruvate guanylyltransferase, found in Roseiflexus castenholzii (strain DSM 13941 / HLO8).